A 91-amino-acid chain; its full sequence is Small ribosomal subunit protein uS15 (91 aa).

Belongs to the universal ribosomal protein uS15 family. In terms of assembly, part of the 30S ribosomal subunit. Forms a bridge to the 50S subunit in the 70S ribosome, contacting the 23S rRNA.

Functionally, one of the primary rRNA binding proteins, it binds directly to 16S rRNA where it helps nucleate assembly of the platform of the 30S subunit by binding and bridging several RNA helices of the 16S rRNA. In terms of biological role, forms an intersubunit bridge (bridge B4) with the 23S rRNA of the 50S subunit in the ribosome. This is Small ribosomal subunit protein uS15 from Rickettsia africae (strain ESF-5).